The sequence spans 157 residues: MSKVTVDLQMAFDGTGVPSKTLFEAWAEAAWQGENPTEVTIRIVDNDESRELNHQYRGKDKPTNVLSFPFEAPAGITVPLAGDLVICAPVVEQEAREQNKDAVAHWAHMVVHGMLHLQGYDHIEVNEAEVMEALEIRLLAQLGFANPYEAEETEPDS.

Positions 112, 116, and 122 each coordinate Zn(2+).

The protein belongs to the endoribonuclease YbeY family. Zn(2+) is required as a cofactor.

It localises to the cytoplasm. Functionally, single strand-specific metallo-endoribonuclease involved in late-stage 70S ribosome quality control and in maturation of the 3' terminus of the 16S rRNA. The polypeptide is Endoribonuclease YbeY (Marinobacter nauticus (strain ATCC 700491 / DSM 11845 / VT8) (Marinobacter aquaeolei)).